Here is a 627-residue protein sequence, read N- to C-terminus: 1-deoxy-D-xylulose-5-phosphate synthase (627 aa).

Thiamine diphosphate-binding positions include His-72 and Gly-113–Ser-115. Asp-144 contributes to the Mg(2+) binding site. Thiamine diphosphate is bound by residues Gly-145–Ala-146, Asn-173, Tyr-283, and Glu-366. Residue Asn-173 coordinates Mg(2+).

This sequence belongs to the transketolase family. DXPS subfamily. As to quaternary structure, homodimer. The cofactor is Mg(2+). Requires thiamine diphosphate as cofactor.

The enzyme catalyses D-glyceraldehyde 3-phosphate + pyruvate + H(+) = 1-deoxy-D-xylulose 5-phosphate + CO2. It participates in metabolic intermediate biosynthesis; 1-deoxy-D-xylulose 5-phosphate biosynthesis; 1-deoxy-D-xylulose 5-phosphate from D-glyceraldehyde 3-phosphate and pyruvate: step 1/1. Catalyzes the acyloin condensation reaction between C atoms 2 and 3 of pyruvate and glyceraldehyde 3-phosphate to yield 1-deoxy-D-xylulose-5-phosphate (DXP). The polypeptide is 1-deoxy-D-xylulose-5-phosphate synthase (Macrococcus caseolyticus (strain JCSC5402) (Macrococcoides caseolyticum)).